The following is a 193-amino-acid chain: uncharacterized protein (193 aa).

4 helical membrane passes run 8–28 (GVLV…VVAI), 46–66 (FFIA…VASA), 82–102 (GLSI…ALVV), and 141–161 (IALT…LLAA).

The protein to M.leprae ML1222.

It localises to the cell membrane. This is an uncharacterized protein from Mycobacterium tuberculosis (strain CDC 1551 / Oshkosh).